The primary structure comprises 91 residues: Large ribosomal subunit protein eL43 (91 aa).

The C4-type zinc finger occupies 38–59 (CNFCGKDSLKRKAAGIWECKAC).

Belongs to the eukaryotic ribosomal protein eL43 family.

The chain is Large ribosomal subunit protein eL43 from Schistosoma mansoni (Blood fluke).